Reading from the N-terminus, the 591-residue chain is Aspartate--tRNA(Asp/Asn) ligase (591 aa).

Glu-175 lines the L-aspartate pocket. The interval 199-202 (QQFK) is aspartate. Residues Arg-221 and His-453 each contribute to the L-aspartate site. Position 221–223 (221–223 (RDE)) interacts with ATP. Residue Glu-486 coordinates ATP. Arg-493 contacts L-aspartate. 538-541 (GIDR) provides a ligand contact to ATP.

Belongs to the class-II aminoacyl-tRNA synthetase family. Type 1 subfamily. Homodimer.

Its subcellular location is the cytoplasm. The enzyme catalyses tRNA(Asx) + L-aspartate + ATP = L-aspartyl-tRNA(Asx) + AMP + diphosphate. In terms of biological role, aspartyl-tRNA synthetase with relaxed tRNA specificity since it is able to aspartylate not only its cognate tRNA(Asp) but also tRNA(Asn). Reaction proceeds in two steps: L-aspartate is first activated by ATP to form Asp-AMP and then transferred to the acceptor end of tRNA(Asp/Asn). In Cereibacter sphaeroides (strain ATCC 17029 / ATH 2.4.9) (Rhodobacter sphaeroides), this protein is Aspartate--tRNA(Asp/Asn) ligase.